Here is a 340-residue protein sequence, read N- to C-terminus: DNA-directed RNA polymerase subunit alpha (340 aa).

An alpha N-terminal domain (alpha-NTD) region spans residues 1-233 (MYKNWRDLIR…EQLSIFINFD (233 aa)). Residues 246 to 340 (DEIDKINENL…RLRGEQNEEE (95 aa)) form an alpha C-terminal domain (alpha-CTD) region.

It belongs to the RNA polymerase alpha chain family. Homodimer. The RNAP catalytic core consists of 2 alpha, 1 beta, 1 beta' and 1 omega subunit. When a sigma factor is associated with the core the holoenzyme is formed, which can initiate transcription.

The catalysed reaction is RNA(n) + a ribonucleoside 5'-triphosphate = RNA(n+1) + diphosphate. In terms of biological role, DNA-dependent RNA polymerase catalyzes the transcription of DNA into RNA using the four ribonucleoside triphosphates as substrates. This Pelobacter propionicus (strain DSM 2379 / NBRC 103807 / OttBd1) protein is DNA-directed RNA polymerase subunit alpha.